Consider the following 610-residue polypeptide: Zinc metalloproteinase-disintegrin-like 3a (610 aa).

An N-terminal signal peptide occupies residues 1–19 (MIQVLLVTILAVFPYQGSS). Positions 20–188 (IILGSGNVND…KKASQLVVTA (169 aa)) are excised as a propeptide. Residues 198-394 (RYVELVIVAD…YTPKCILNEP (197 aa)) enclose the Peptidase M12B domain. A Ca(2+)-binding site is contributed by glutamate 201. Residue asparagine 217 is glycosylated (N-linked (GlcNAc...) asparagine). Aspartate 285 contributes to the Ca(2+) binding site. 3 cysteine pairs are disulfide-bonded: cysteine 309–cysteine 389, cysteine 349–cysteine 373, and cysteine 351–cysteine 356. Histidine 334 provides a ligand contact to Zn(2+). Glutamate 335 is a catalytic residue. Zn(2+)-binding residues include histidine 338 and histidine 344. Positions 389, 392, 404, 407, 411, 414, and 417 each coordinate Ca(2+). Residues 402 to 488 (PPVCGNELLE…DCPTDDFHKN (87 aa)) form the Disintegrin domain. 14 cysteine pairs are disulfide-bonded: cysteine 405–cysteine 434, cysteine 416–cysteine 429, cysteine 418–cysteine 424, cysteine 428–cysteine 451, cysteine 442–cysteine 448, cysteine 447–cysteine 473, cysteine 460–cysteine 480, cysteine 467–cysteine 499, cysteine 492–cysteine 504, cysteine 511–cysteine 561, cysteine 526–cysteine 572, cysteine 539–cysteine 549, cysteine 556–cysteine 598, and cysteine 592–cysteine 603. A D/ECD-tripeptide motif is present at residues 466–468 (ECD).

It belongs to the venom metalloproteinase (M12B) family. P-III subfamily. Zn(2+) serves as cofactor. In terms of tissue distribution, expressed by the venom gland.

The protein localises to the secreted. Functionally, snake venom metalloproteinase that impairs hemostasis in the envenomed animal. The polypeptide is Zinc metalloproteinase-disintegrin-like 3a (Crotalus adamanteus (Eastern diamondback rattlesnake)).